A 296-amino-acid polypeptide reads, in one-letter code: MKTGIIQQSLSGFYDVIADEKIYRTRARGNFRQRKIKPVVGDHVEFSAENQQEGYLLKILPRRNQLVRPPVANVDMAVVVTSAKEPAFSANLLDRQLIALEAQDVTPLIYFSKTDLLTDDEYQQLLPTIEGYRKIGYQVYAAREPFDSDQLANLMEGLKGNIVTMMGQTGAGKSTLLNHLAPQLKLATGEISQALQRGRHTTRKVSLLDVNGALIADTPGFSSYETFDMTVNDLPQLFPEMAKISADCKFRGCLHIKEPQCAVKEAVNNGIIMKSRYNDYLQFHELIANQKPNYKK.

In terms of domain architecture, CP-type G spans 63 to 224; that stretch reads RNQLVRPPVA…IADTPGFSSY (162 aa). Residues 112 to 115 and 167 to 175 each bind GTP; these read SKTD and GQTGAGKST. Residues cysteine 248, cysteine 253, histidine 255, and cysteine 261 each contribute to the Zn(2+) site.

It belongs to the TRAFAC class YlqF/YawG GTPase family. RsgA subfamily. In terms of assembly, monomer. Associates with 30S ribosomal subunit, binds 16S rRNA. The cofactor is Zn(2+).

The protein localises to the cytoplasm. Functionally, one of several proteins that assist in the late maturation steps of the functional core of the 30S ribosomal subunit. Helps release RbfA from mature subunits. May play a role in the assembly of ribosomal proteins into the subunit. Circularly permuted GTPase that catalyzes slow GTP hydrolysis, GTPase activity is stimulated by the 30S ribosomal subunit. This Limosilactobacillus reuteri (strain DSM 20016) (Lactobacillus reuteri) protein is Small ribosomal subunit biogenesis GTPase RsgA.